Reading from the N-terminus, the 465-residue chain is Serine carboxypeptidase-like 19 (465 aa).

Residues 1-23 (MRNLSFIVLFLLTLFFIHHLVDA) form the signal peptide. Position 77–79 (77–79 (TGG)) interacts with substrate. 3 disulfides stabilise this stretch: Cys82–Cys353, Cys246–Cys260, and Cys284–Cys320. N-linked (GlcNAc...) asparagine glycosylation occurs at Asn103. 177–179 (DSY) provides a ligand contact to substrate. The active site involves Ser178. Residues 292-317 (DTPNIRTDRRRVMKEFSVNDSSSLPP) constitute a propeptide, linker peptide. Asn310 and Asn373 each carry an N-linked (GlcNAc...) asparagine glycan. Asp389 is an active-site residue. N-linked (GlcNAc...) asparagine glycosylation is present at Asn405. Substrate is bound at residue 439–443 (KGGGH). Residue His443 is part of the active site.

It belongs to the peptidase S10 family. Heterodimer. In terms of processing, N-glycosylated. Expressed in roots and flowers, and at lower levels in young leaves and seedlings. Expressed in mature seeds and detected in expanding siliques.

It localises to the secreted. The catalysed reaction is 1-O-(trans-sinapoyl)-beta-D-glucose + choline = O-sinapoylcholine + D-glucose. Slightly inhibited by phenylmethylsulfonyl fluoride (PMSF). Involved in plants secondary metabolism. Functions as acyltransferase to form the sinapate ester sinapoylcholine also known as sinapine. Able to convert in vitro benzoylglucose into benzoylcholine. This is Serine carboxypeptidase-like 19 from Arabidopsis thaliana (Mouse-ear cress).